We begin with the raw amino-acid sequence, 421 residues long: Succinate--CoA ligase [ADP-forming] subunit beta, mitochondrial (421 aa).

The N-terminal 26 residues, 1 to 26 (MRGLVNKLVSRSLSISGKWQNQQLRR), are a transit peptide targeting the mitochondrion. Positions 35–278 (AELMGKYGVN…PTQEDPREVA (244 aa)) constitute an ATP-grasp domain. Residues lysine 74, 81-83 (GRG), and glutamate 141 contribute to the ATP site. 2 residues coordinate Mg(2+): asparagine 233 and aspartate 247. Substrate contacts are provided by residues asparagine 298 and 355–357 (GIM).

This sequence belongs to the succinate/malate CoA ligase beta subunit family. Heterodimer of an alpha and a beta subunit. Requires Mg(2+) as cofactor.

The protein resides in the mitochondrion. The catalysed reaction is succinate + ATP + CoA = succinyl-CoA + ADP + phosphate. It participates in carbohydrate metabolism; tricarboxylic acid cycle; succinate from succinyl-CoA (ligase route): step 1/1. Its function is as follows. Succinyl-CoA synthetase functions in the citric acid cycle (TCA), coupling the hydrolysis of succinyl-CoA to the synthesis of ATP and thus represents the only step of substrate-level phosphorylation in the TCA. The beta subunit provides nucleotide specificity of the enzyme and binds the substrate succinate, while the binding sites for coenzyme A and phosphate are found in the alpha subunit. The polypeptide is Succinate--CoA ligase [ADP-forming] subunit beta, mitochondrial (Arabidopsis thaliana (Mouse-ear cress)).